The chain runs to 973 residues: MEKGKGVSRKGRKLASSRRRQAREPADGQDAPVAAEAESWPSDADAELQGFFQDCGAKERGFVTREDLAEARFSFLGGEEPQMIFDWVDVESRGHLSLEEFSSGLKNVFGSSPGTHRLRTKRSLPSQRESVTSTLPVPEEADAEEKEAFLALIGQMETGHSLSEQAEIWKLWRELRQEEPQLAGNLEGFLAKMSSRLQEAQADREALAWTLRKRDSDHLYKVRQLYEETEEQIRREKQQLQAQSDSRGMALSAHMQEALEAKEQEVQRLAEGQRELEAQLLHLSSTQQEANRENLQLREAERDLAGQLEEVRGQLQVTRGHLDTARTRGKVSWQIEEEPSVPRANKEAPDPQAVPTEEAPLPELFGNNDNWDQFLSSIEAHSHRTLRLCWSPPPSPSSTSAPQTPRIVRQISISKISALQFSQEPASDPDPGPRGSPEVPPGGAKDGKGVEDPKGQDEQDVSSKQPVDSPDSDARPKGSFLWSLPGALTAESGTVEAAFRDQLAFEAEPPPQGLSSSPQSPAGSRKQTQTPDLGDKSLWSGPDPAKQSLEREVMAEDLKLGLGSQGATALPEGATEPSLSLESVDQVGPERPVQDATHLARQESHAKGFQEAPGQVLSLDSLPTHLPQSLEEQLRPEEGNLGERGQQDPGSEASESHGLEARSMESPQQDDPLPNTSQPPAETEVPAPGQMSPPRGSPILGAGAGLAVGTPETTHTLLTLAESEAQPGPVSMPVQVESKSGAPQPTEPEAESRPEDPRTDLQEAERSSSPGDLTAGKPQADPDYLYHVVFLGDSNVGKTSFLHLLHHDAFATGLTATVGVDFRVKNLLVDNKTFALQLWDTAGQERYHSLTRQLLRKAEGVVLMYDVTSQESFTHVRYWLDCLQDAGVEGVAMVLLGNKMDCEEERQVPTEAGRRLAQELGVSFGECSAALGHNILEPMMNLARSLKMQEDRLKASLAEVTHPQSTKRAGCCH.

Residues 1–21 (MEKGKGVSRKGRKLASSRRRQ) show a composition bias toward basic residues. The segment at 1-42 (MEKGKGVSRKGRKLASSRRRQAREPADGQDAPVAAEAESWPS) is disordered. An EF-hand domain is found at 77–111 (GGEEPQMIFDWVDVESRGHLSLEEFSSGLKNVFGS). The segment at 112 to 140 (SPGTHRLRTKRSLPSQRESVTSTLPVPEE) is disordered. Positions 123 to 135 (SLPSQRESVTSTL) are enriched in polar residues. A coiled-coil region spans residues 219 to 310 (LYKVRQLYEE…ERDLAGQLEE (92 aa)). Disordered regions lie at residues 319 to 368 (RGHL…FGNN), 421 to 481 (FSQE…GSFL), 493 to 708 (GTVE…GLAV), and 724 to 779 (EAQP…GKPQ). Residues 428–440 (DPDPGPRGSPEVP) are compositionally biased toward pro residues. The span at 445 to 457 (KDGKGVEDPKGQD) shows a compositional bias: basic and acidic residues. The span at 513–524 (GLSSSPQSPAGS) shows a compositional bias: low complexity. 3 stretches are compositionally biased toward basic and acidic residues: residues 548 to 559 (SLEREVMAEDLK), 598 to 608 (HLARQESHAKG), and 654 to 663 (SESHGLEARS). The segment covering 665 to 680 (ESPQQDDPLPNTSQPP) has biased composition (polar residues). The segment covering 750 to 766 (AESRPEDPRTDLQEAER) has biased composition (basic and acidic residues). GTP is bound by residues 792–799 (GDSNVGKT), 840–844 (DTAGQ), and 898–901 (NKMD). Residues Cys971 and Cys972 are each lipidated (S-geranylgeranyl cysteine).

The protein belongs to the small GTPase superfamily. Rab family.

The protein resides in the cell membrane. This is Ras-related protein Rab-44 (Rab44) from Mus musculus (Mouse).